A 1182-amino-acid chain; its full sequence is WD repeat-containing protein on Y chromosome (1182 aa).

8 WD repeats span residues 155-199 (EEIT…LRSA), 323-362 (RIPL…EPSA), 366-405 (GHNG…LLQT), 456-495 (THAA…RKII), 508-547 (TIDI…VVRN), 595-635 (FHTD…RRYN), 740-779 (KTGD…IPKA), and 823-862 (GHLK…LGTL). Positions 1031–1182 (TKAGANLDQP…PKAKTDRETH (152 aa)) are disordered. Low complexity-rich tracts occupy residues 1079–1092 (GVSS…VSQG) and 1103–1121 (TTSL…PKGS).

This chain is WD repeat-containing protein on Y chromosome, found in Drosophila virilis (Fruit fly).